Reading from the N-terminus, the 749-residue chain is 5-methyltetrahydropteroyltriglutamate--homocysteine methyltransferase (749 aa).

5-methyltetrahydropteroyltri-L-glutamate is bound by residues arginine 15–lysine 18 and lysine 114. L-homocysteine-binding positions include isoleucine 425–serine 427 and glutamate 478. L-methionine is bound by residues isoleucine 425–serine 427 and glutamate 478. Tryptophan 555 provides a ligand contact to 5-methyltetrahydropteroyltri-L-glutamate. Residue aspartate 593 participates in L-homocysteine binding. Aspartate 593 is a binding site for L-methionine. Position 599 (glutamate 599) interacts with 5-methyltetrahydropteroyltri-L-glutamate. Zn(2+)-binding residues include histidine 636, cysteine 638, and glutamate 660. The active-site Proton donor is histidine 689. Zn(2+) is bound at residue cysteine 721.

This sequence belongs to the vitamin-B12 independent methionine synthase family. It depends on Zn(2+) as a cofactor.

The enzyme catalyses 5-methyltetrahydropteroyltri-L-glutamate + L-homocysteine = tetrahydropteroyltri-L-glutamate + L-methionine. It functions in the pathway amino-acid biosynthesis; L-methionine biosynthesis via de novo pathway; L-methionine from L-homocysteine (MetE route): step 1/1. Functionally, catalyzes the transfer of a methyl group from 5-methyltetrahydrofolate to homocysteine resulting in methionine formation. In Streptococcus pneumoniae serotype 4 (strain ATCC BAA-334 / TIGR4), this protein is 5-methyltetrahydropteroyltriglutamate--homocysteine methyltransferase.